Consider the following 200-residue polypeptide: ATP synthase subunit delta', mitochondrial (200 aa).

The transit peptide at 1-21 (MFRHSSRLLARATTMGWRRPF) directs the protein to the mitochondrion.

The protein belongs to the ATPase epsilon chain family. As to quaternary structure, F-type ATPases have 2 components, CF(1) - the catalytic core - and CF(0) - the membrane proton channel. CF(1) has five subunits: alpha(3), beta(3), gamma(1), delta(1), epsilon(1). CF(0) has three main subunits: a, b and c.

It is found in the mitochondrion. It localises to the mitochondrion inner membrane. In terms of biological role, mitochondrial membrane ATP synthase (F(1)F(0) ATP synthase or Complex V) produces ATP from ADP in the presence of a proton gradient across the membrane which is generated by electron transport complexes of the respiratory chain. F-type ATPases consist of two structural domains, F(1) - containing the extramembraneous catalytic core, and F(0) - containing the membrane proton channel, linked together by a central stalk and a peripheral stalk. During catalysis, ATP turnover in the catalytic domain of F(1) is coupled via a rotary mechanism of the central stalk subunits to proton translocation. Part of the complex F(1) domain and of the central stalk which is part of the complex rotary element. Rotation of the central stalk against the surrounding alpha(3)beta(3) subunits leads to hydrolysis of ATP in three separate catalytic sites on the beta subunits. The chain is ATP synthase subunit delta', mitochondrial from Ipomoea batatas (Sweet potato).